Reading from the N-terminus, the 643-residue chain is Transmembrane protein 62 (643 aa).

The chain crosses the membrane as a helical span at residues 9–29 (VVAGLAAAAVAALLLEHYGLA). N-linked (GlcNAc...) asparagine glycosylation is present at asparagine 180. 4 helical membrane passes run 431–451 (IVAR…LITF), 484–504 (YSVL…GEII), 532–552 (GIIQ…WSLL), and 572–592 (IIPV…SCYF).

It localises to the membrane. The sequence is that of Transmembrane protein 62 (Tmem62) from Mus musculus (Mouse).